Reading from the N-terminus, the 140-residue chain is Nucleoside diphosphate kinase (140 aa).

ATP contacts are provided by Lys-11, Phe-59, Arg-87, Thr-93, Arg-104, and Asn-114. His-117 (pros-phosphohistidine intermediate) is an active-site residue.

Belongs to the NDK family. As to quaternary structure, homotetramer. The cofactor is Mg(2+).

It localises to the cytoplasm. The catalysed reaction is a 2'-deoxyribonucleoside 5'-diphosphate + ATP = a 2'-deoxyribonucleoside 5'-triphosphate + ADP. The enzyme catalyses a ribonucleoside 5'-diphosphate + ATP = a ribonucleoside 5'-triphosphate + ADP. Major role in the synthesis of nucleoside triphosphates other than ATP. The ATP gamma phosphate is transferred to the NDP beta phosphate via a ping-pong mechanism, using a phosphorylated active-site intermediate. The protein is Nucleoside diphosphate kinase of Methylobacterium nodulans (strain LMG 21967 / CNCM I-2342 / ORS 2060).